The chain runs to 126 residues: MSALKQIKFDEKGLIPAISQDFKTGEILMFAWMNQESLKLTIKKQQAVYYSRSRQKIWFKGEESGHIQHIKEIFTDCDNDVILLKIEQIGGISCHTGRISCFFQQLDKKNWKIITNMIKNPRDIYG.

Residue aspartate 76 coordinates Mg(2+). Cysteine 77 provides a ligand contact to Zn(2+). Mg(2+) is bound by residues aspartate 78 and aspartate 80. Zn(2+) contacts are provided by cysteine 94 and cysteine 101.

Belongs to the PRA-CH family. As to quaternary structure, homodimer. Mg(2+) serves as cofactor. It depends on Zn(2+) as a cofactor.

It localises to the cytoplasm. The catalysed reaction is 1-(5-phospho-beta-D-ribosyl)-5'-AMP + H2O = 1-(5-phospho-beta-D-ribosyl)-5-[(5-phospho-beta-D-ribosylamino)methylideneamino]imidazole-4-carboxamide. It participates in amino-acid biosynthesis; L-histidine biosynthesis; L-histidine from 5-phospho-alpha-D-ribose 1-diphosphate: step 3/9. Catalyzes the hydrolysis of the adenine ring of phosphoribosyl-AMP. The chain is Phosphoribosyl-AMP cyclohydrolase from Vesicomyosocius okutanii subsp. Calyptogena okutanii (strain HA).